The sequence spans 183 residues: Protein GrpE (183 aa).

Over residues 1 to 14 (MSNEENKINEEALK) the composition is skewed to basic and acidic residues. The interval 1–20 (MSNEENKINEEALKQQDAAE) is disordered.

The protein belongs to the GrpE family. Homodimer.

The protein resides in the cytoplasm. Participates actively in the response to hyperosmotic and heat shock by preventing the aggregation of stress-denatured proteins, in association with DnaK and GrpE. It is the nucleotide exchange factor for DnaK and may function as a thermosensor. Unfolded proteins bind initially to DnaJ; upon interaction with the DnaJ-bound protein, DnaK hydrolyzes its bound ATP, resulting in the formation of a stable complex. GrpE releases ADP from DnaK; ATP binding to DnaK triggers the release of the substrate protein, thus completing the reaction cycle. Several rounds of ATP-dependent interactions between DnaJ, DnaK and GrpE are required for fully efficient folding. The chain is Protein GrpE from Vibrio vulnificus (strain CMCP6).